A 121-amino-acid polypeptide reads, in one-letter code: MKEGIHPDYKATKVLCACGNVIETRSVRGDFHIEICSNCHPFFTGKQKIMDTAGRIERFKTRYAATPAKAEPAKKAPAAEPAKKVEAAKENRAAKRAKAGKSKKSEAAPAAEAPAADAKPE.

The tract at residues 1-97 (MKEGIHPDYK…AKENRAAKRA (97 aa)) is large ribosomal subunit protein bL31. Zn(2+) contacts are provided by cysteine 16, cysteine 18, cysteine 36, and cysteine 39. Residues 65–80 (ATPAKAEPAKKAPAAE) show a composition bias toward low complexity. The interval 65 to 121 (ATPAKAEPAKKAPAAEPAKKVEAAKENRAAKRAKAGKSKKSEAAPAAEAPAADAKPE) is disordered. Positions 74–121 (KKAPAAEPAKKVEAAKENRAAKRAKAGKSKKSEAAPAAEAPAADAKPE) are unknown. Positions 81 to 93 (PAKKVEAAKENRA) are enriched in basic and acidic residues. Low complexity predominate over residues 107–121 (AAPAAEAPAADAKPE).

This sequence belongs to the bacterial ribosomal protein bL31 family. Type A subfamily. As to quaternary structure, part of the 50S ribosomal subunit. The cofactor is Zn(2+).

In terms of biological role, binds the 23S rRNA. In Anaeromyxobacter dehalogenans (strain 2CP-C), this protein is Large ribosomal subunit protein bL31.